We begin with the raw amino-acid sequence, 149 residues long: YbbR-like domain-containing protein in def 5'region (149 aa).

The region spanning 1–68 (IPVEVLAQGA…LRPNRVRVVE (68 aa)) is the YbbR-like domain.

The polypeptide is YbbR-like domain-containing protein in def 5'region (Thermus thermophilus).